A 245-amino-acid chain; its full sequence is MGKRDNRVAYMNPIAMARSRGPIQSSGPTIQDYLNRPRPTWEEVKEQLEKKKKGSKALAEFEEKMNENWKKELEKHREKLLSGNESSSKKRQKKKKEKKKSGRYSSSSSSSSDSSSSSSDSEEEDKKQTKRRKKKKSHCHKSPETSVSDSDSDSKDGSKKKKKSKDITEREKDTKGLSKKRKMYEDKPLSSESLSESDCGEVQAKKKKSGEERERTTDKAKKRRKHKKHSKKKKKKAASSSSDSP.

2 disordered regions span residues 19–38 and 69–245; these read SRGPIQSSGPTIQDYLNRPR and WKKE…SDSP. A compositionally biased stretch (basic and acidic residues) spans 69 to 80; it reads WKKELEKHREKL. Residue Ser-82 is modified to Phosphoserine. Basic residues predominate over residues 89-102; it reads KKRQKKKKEKKKSG. Low complexity predominate over residues 103–119; the sequence is RYSSSSSSSSDSSSSSS. Residues 128-140 are compositionally biased toward basic residues; sequence QTKRRKKKKSHCH. Basic and acidic residues predominate over residues 165–176; sequence KDITEREKDTKG. Phosphoserine occurs at positions 190, 191, 193, and 195. Positions 209–219 are enriched in basic and acidic residues; sequence SGEERERTTDK. Basic residues predominate over residues 220-237; the sequence is AKKRRKHKKHSKKKKKKA.

This sequence belongs to the FAM133 family.

The chain is Protein FAM133B (Fam133b) from Rattus norvegicus (Rat).